Consider the following 279-residue polypeptide: Tryptophan synthase alpha chain (279 aa).

Residues E63 and D74 each act as proton acceptor in the active site.

The protein belongs to the TrpA family. In terms of assembly, tetramer of two alpha and two beta chains.

It carries out the reaction (1S,2R)-1-C-(indol-3-yl)glycerol 3-phosphate + L-serine = D-glyceraldehyde 3-phosphate + L-tryptophan + H2O. It participates in amino-acid biosynthesis; L-tryptophan biosynthesis; L-tryptophan from chorismate: step 5/5. The alpha subunit is responsible for the aldol cleavage of indoleglycerol phosphate to indole and glyceraldehyde 3-phosphate. The protein is Tryptophan synthase alpha chain of Prochlorococcus marinus subsp. pastoris (strain CCMP1986 / NIES-2087 / MED4).